The chain runs to 438 residues: DNA primase DnaG (438 aa).

One can recognise a Toprim domain in the interval 169 to 243; the sequence is DSIIVVEGRA…DIDYVARAPY (75 aa). The Mg(2+) site is built by Glu-175, Asp-217, and Asp-219.

This sequence belongs to the archaeal DnaG primase family. In terms of assembly, forms a ternary complex with MCM helicase and DNA. The cofactor is Mg(2+).

The enzyme catalyses ssDNA + n NTP = ssDNA/pppN(pN)n-1 hybrid + (n-1) diphosphate.. In terms of biological role, RNA polymerase that catalyzes the synthesis of short RNA molecules used as primers for DNA polymerase during DNA replication. In Methanococcus maripaludis (strain C6 / ATCC BAA-1332), this protein is DNA primase DnaG.